The sequence spans 905 residues: Cation-transporting ATPase pma1 (905 aa).

A run of 4 helical transmembrane segments spans residues 60 to 80 (FLLQFHQPLLYILLIAGTVKA), 81 to 101 (FLGSWTNAWVIWGVTLVNAII), 248 to 268 (FSHTLLYVIVTLAAFTFAVGW), and 283 to 303 (ALAVSAIPEGLPAVVTVTLAI). Residue aspartate 333 is the 4-aspartylphosphate intermediate of the active site. A run of 5 helical transmembrane segments spans residues 716–736 (ILISVLLALNLPILSLQVLWL), 774–794 (LLHRILLVSLFNWILIFGMFE), 809–829 (MAIQALVAARVIYLLSISQLG), 848–868 (ILLLGIAVAIALQIGFSQLPF), and 880–900 (WQQWAICLLPMIPMVPVAILA).

This sequence belongs to the cation transport ATPase (P-type) (TC 3.A.3) family. Type IIA subfamily.

It localises to the cell membrane. The enzyme catalyses ATP + H2O = ADP + phosphate + H(+). Functionally, could mediate calcium influx. This chain is Cation-transporting ATPase pma1 (pma1), found in Synechocystis sp. (strain ATCC 27184 / PCC 6803 / Kazusa).